The following is a 121-amino-acid chain: Large ribosomal subunit protein bL20 (121 aa).

The protein belongs to the bacterial ribosomal protein bL20 family.

Its function is as follows. Binds directly to 23S ribosomal RNA and is necessary for the in vitro assembly process of the 50S ribosomal subunit. It is not involved in the protein synthesizing functions of that subunit. The chain is Large ribosomal subunit protein bL20 from Koribacter versatilis (strain Ellin345).